The following is a 382-amino-acid chain: Galactokinase (382 aa).

Substrate is bound at residue 34-37 (EHTD). 124–130 (GAGLSSS) is an ATP binding site. Mg(2+) contacts are provided by Ser-130 and Glu-162. Asp-174 functions as the Proton acceptor in the catalytic mechanism. Tyr-223 serves as a coordination point for substrate.

The protein belongs to the GHMP kinase family. GalK subfamily.

It localises to the cytoplasm. The catalysed reaction is alpha-D-galactose + ATP = alpha-D-galactose 1-phosphate + ADP + H(+). It functions in the pathway carbohydrate metabolism; galactose metabolism. Functionally, catalyzes the transfer of the gamma-phosphate of ATP to D-galactose to form alpha-D-galactose-1-phosphate (Gal-1-P). This is Galactokinase from Salmonella choleraesuis (strain SC-B67).